The sequence spans 485 residues: Anthranilate synthase component I-like protein (485 aa).

L-tryptophan-binding positions include serine 69 and 271–273; that span reads PFA. 306–307 contributes to the chorismate binding site; it reads GT. Residue glutamate 333 coordinates Mg(2+). Residues arginine 441, 455–457, and glycine 457 contribute to the chorismate site; that span reads GAG. Glutamate 470 is a Mg(2+) binding site.

It belongs to the anthranilate synthase component I family. Tetramer of two components I and two components II. It depends on Mg(2+) as a cofactor.

It carries out the reaction chorismate + L-glutamine = anthranilate + pyruvate + L-glutamate + H(+). It functions in the pathway amino-acid biosynthesis; L-tryptophan biosynthesis; L-tryptophan from chorismate: step 1/5. The chain is Anthranilate synthase component I-like protein (trpE2) from Synechocystis sp. (strain ATCC 27184 / PCC 6803 / Kazusa).